We begin with the raw amino-acid sequence, 158 residues long: MYEGVQVSSKLEQLQGLLAPVVVALGYQCWGIDFSSQGKHSVLRIYIDKEGGVLVDDCAIVSRQISGVLDVEDPISTEYTLEVSSPGMERPLFTIEQFALYAGEQVRIKLRSPFEGRRNFQGLLRGVEEQDVVVQVEDHEFLLPIDLIDKANIIPTFD.

This sequence belongs to the RimP family.

Its subcellular location is the cytoplasm. Required for maturation of 30S ribosomal subunits. The polypeptide is Ribosome maturation factor RimP (Pseudomonas syringae pv. tomato (strain ATCC BAA-871 / DC3000)).